The following is a 116-amino-acid chain: Nucleoid-associated protein A9601_00191 (116 aa).

This sequence belongs to the YbaB/EbfC family. As to quaternary structure, homodimer.

Its subcellular location is the cytoplasm. It localises to the nucleoid. Functionally, binds to DNA and alters its conformation. May be involved in regulation of gene expression, nucleoid organization and DNA protection. The sequence is that of Nucleoid-associated protein A9601_00191 from Prochlorococcus marinus (strain AS9601).